The sequence spans 295 residues: MPWIQLKINTSGKVAEQLGDTMIESGAVSVTFQDTHDTPVFEPLPGETRLWGDTDAIALYDAETDMNAVIAMLEQEPLLGVGFKHKIEQLEDKDWEREWMDNFHPMQFGKRLWICPSWREIPDPSAVNVMLDPGLAFGTGTHPTTSLCLQWLDGLDLEGKTIIDFGCGSGILAIAALKLGAARAIGIDIDPQAIQASRDNAQRNGVSERLELYLPKDQPADLSADVVVANILAGPLRELAPLISDLPKAGGHLGLSGVLSTQADGVAEAYADKFTLDPVAEREEWCRITGQRHTS.

S-adenosyl-L-methionine contacts are provided by Thr-145, Gly-166, Asp-188, and Asn-230.

It belongs to the methyltransferase superfamily. PrmA family.

Its subcellular location is the cytoplasm. It carries out the reaction L-lysyl-[protein] + 3 S-adenosyl-L-methionine = N(6),N(6),N(6)-trimethyl-L-lysyl-[protein] + 3 S-adenosyl-L-homocysteine + 3 H(+). Methylates ribosomal protein L11. This Pectobacterium atrosepticum (strain SCRI 1043 / ATCC BAA-672) (Erwinia carotovora subsp. atroseptica) protein is Ribosomal protein L11 methyltransferase.